A 306-amino-acid polypeptide reads, in one-letter code: Aspartate carbamoyltransferase catalytic subunit (306 aa).

Arginine 56 and threonine 57 together coordinate carbamoyl phosphate. Residue lysine 84 coordinates L-aspartate. Residues arginine 106, histidine 134, and glutamine 137 each contribute to the carbamoyl phosphate site. 2 residues coordinate L-aspartate: arginine 167 and arginine 221. Residues glycine 262 and proline 263 each contribute to the carbamoyl phosphate site.

This sequence belongs to the aspartate/ornithine carbamoyltransferase superfamily. ATCase family. In terms of assembly, heterododecamer (2C3:3R2) of six catalytic PyrB chains organized as two trimers (C3), and six regulatory PyrI chains organized as three dimers (R2).

It carries out the reaction carbamoyl phosphate + L-aspartate = N-carbamoyl-L-aspartate + phosphate + H(+). It participates in pyrimidine metabolism; UMP biosynthesis via de novo pathway; (S)-dihydroorotate from bicarbonate: step 2/3. In terms of biological role, catalyzes the condensation of carbamoyl phosphate and aspartate to form carbamoyl aspartate and inorganic phosphate, the committed step in the de novo pyrimidine nucleotide biosynthesis pathway. The sequence is that of Aspartate carbamoyltransferase catalytic subunit from Desulforudis audaxviator (strain MP104C).